Here is a 1415-residue protein sequence, read N- to C-terminus: DNA-directed RNA polymerase subunit beta' (1415 aa).

4 residues coordinate Zn(2+): C72, C74, C87, and C90. Residues D463, D465, and D467 each contribute to the Mg(2+) site. C811, C885, C892, and C895 together coordinate Zn(2+).

The protein belongs to the RNA polymerase beta' chain family. As to quaternary structure, the RNAP catalytic core consists of 2 alpha, 1 beta, 1 beta' and 1 omega subunit. When a sigma factor is associated with the core the holoenzyme is formed, which can initiate transcription. The cofactor is Mg(2+). Zn(2+) serves as cofactor.

The enzyme catalyses RNA(n) + a ribonucleoside 5'-triphosphate = RNA(n+1) + diphosphate. Functionally, DNA-dependent RNA polymerase catalyzes the transcription of DNA into RNA using the four ribonucleoside triphosphates as substrates. The sequence is that of DNA-directed RNA polymerase subunit beta' from Cereibacter sphaeroides (strain ATCC 17023 / DSM 158 / JCM 6121 / CCUG 31486 / LMG 2827 / NBRC 12203 / NCIMB 8253 / ATH 2.4.1.) (Rhodobacter sphaeroides).